Consider the following 188-residue polypeptide: MEGVESKEREVMVAKPVAVVGVCDLLLRLLAFTVTLVAAIVIAVDKQTKLVPIQLSDSFPPLNVPLTAKWHQMSAFVYFLVTNAIACTYAAMSLLLALVNRGKSKGLWTLIAVLDTFMVALLFSGNGAAAAVGILGYKGNSHVNWNKVCNVFGKFCDQMAASIGVSLIGSLAFLLLVVIPVVRLHRRT.

Residues 1-23 (MEGVESKEREVMVAKPVAVVGVC) lie on the Cytoplasmic side of the membrane. A helical transmembrane segment spans residues 24 to 44 (DLLLRLLAFTVTLVAAIVIAV). Over 45-78 (DKQTKLVPIQLSDSFPPLNVPLTAKWHQMSAFVY) the chain is Extracellular. Residues 79-99 (FLVTNAIACTYAAMSLLLALV) traverse the membrane as a helical segment. Residues 100-116 (NRGKSKGLWTLIAVLDT) lie on the Cytoplasmic side of the membrane. Residues 117-137 (FMVALLFSGNGAAAAVGILGY) traverse the membrane as a helical segment. Residues 138–161 (KGNSHVNWNKVCNVFGKFCDQMAA) are Extracellular-facing. A helical membrane pass occupies residues 162–182 (SIGVSLIGSLAFLLLVVIPVV). Over 183-188 (RLHRRT) the chain is Cytoplasmic.

The protein belongs to the Casparian strip membrane proteins (CASP) family. In terms of assembly, homodimer and heterodimers.

It localises to the cell membrane. This Glycine max (Soybean) protein is CASP-like protein 1E1.